The following is a 432-amino-acid chain: Tryptophan--tRNA ligase, cytoplasmic (432 aa).

The 'HIGH' region motif lies at 111–120 (PSSDSMHLGH). The 'KMSKS' region signature appears at 295-299 (KMSAS).

The protein belongs to the class-I aminoacyl-tRNA synthetase family. As to quaternary structure, homodimer.

It is found in the cytoplasm. The catalysed reaction is tRNA(Trp) + L-tryptophan + ATP = L-tryptophyl-tRNA(Trp) + AMP + diphosphate + H(+). The protein is Tryptophan--tRNA ligase, cytoplasmic (WRS1) of Saccharomyces cerevisiae (strain ATCC 204508 / S288c) (Baker's yeast).